The primary structure comprises 272 residues: Putative hydro-lyase RPD_1846 (272 aa).

Belongs to the D-glutamate cyclase family.

This is Putative hydro-lyase RPD_1846 from Rhodopseudomonas palustris (strain BisB5).